The following is an 85-amino-acid chain: Makatoxin-2 (85 aa).

Positions 1-19 are cleaved as a signal peptide; it reads MNYLIVISFALLLMTSVES. One can recognise an LCN-type CS-alpha/beta domain in the interval 21–83; sequence RDAYIADSEN…VPIRIPGPCR (63 aa). 4 disulfide bridges follow: Cys31–Cys82, Cys35–Cys55, Cys41–Cys65, and Cys45–Cys67.

It belongs to the long (4 C-C) scorpion toxin superfamily. Sodium channel inhibitor family. Alpha subfamily. Expressed by the venom gland.

Its subcellular location is the secreted. Functionally, this protein markedly relaxes the rat carbachol-precontracted anococcygeus muscle. This relaxation is inhibited by the inhibitor of nitric oxide (NO) synthase, N-nitro-L-arginine methyl ester (L-NAME), suggesting that the response induced by this protein is NO-mediated. The protein is Makatoxin-2 of Olivierus martensii (Manchurian scorpion).